The following is a 379-amino-acid chain: Cytochrome b (379 aa).

The next 4 helical transmembrane spans lie at 33–53 (FGSLLGMCLIIQILTGLFLAM), 77–98 (WLIRYLHANGASMFFICLFIHV), 113–133 (WNIGIILFLTTMATAFVGYVL), and 178–198 (FFAFHFILPFIIAAFALVHLL). Heme b-binding residues include His-83 and His-97. Heme b-binding residues include His-182 and His-196. His-201 lines the a ubiquinone pocket. 4 consecutive transmembrane segments (helical) span residues 226-246 (TKDLLGIFLLLLVLMILVLFF), 288-308 (LGGVLALVLSILILAAFPLLN), 320-340 (VTQVIYWIFIANLLVLTWIGG), and 347-367 (FTTIGQIASITYFAIIIILIP).

It belongs to the cytochrome b family. The cytochrome bc1 complex contains 11 subunits: 3 respiratory subunits (MT-CYB, CYC1 and UQCRFS1), 2 core proteins (UQCRC1 and UQCRC2) and 6 low-molecular weight proteins (UQCRH/QCR6, UQCRB/QCR7, UQCRQ/QCR8, UQCR10/QCR9, UQCR11/QCR10 and a cleavage product of UQCRFS1). This cytochrome bc1 complex then forms a dimer. The cofactor is heme b.

It localises to the mitochondrion inner membrane. Functionally, component of the ubiquinol-cytochrome c reductase complex (complex III or cytochrome b-c1 complex) that is part of the mitochondrial respiratory chain. The b-c1 complex mediates electron transfer from ubiquinol to cytochrome c. Contributes to the generation of a proton gradient across the mitochondrial membrane that is then used for ATP synthesis. This chain is Cytochrome b (MT-CYB), found in Akodon cursor (Cursor grass mouse).